The following is an 816-amino-acid chain: Leucine--tRNA ligase (816 aa).

The 'HIGH' region signature appears at 40–51; sequence SYPSGSQLHAGH. The 'KMSKS' region motif lies at 576–580; the sequence is KMSKS. Residue lysine 579 participates in ATP binding.

Belongs to the class-I aminoacyl-tRNA synthetase family.

It localises to the cytoplasm. It catalyses the reaction tRNA(Leu) + L-leucine + ATP = L-leucyl-tRNA(Leu) + AMP + diphosphate. The polypeptide is Leucine--tRNA ligase (Clostridium perfringens (strain 13 / Type A)).